The chain runs to 465 residues: COP9 signalosome complex subunit 5 (465 aa).

An MPN domain is found at 74–216; the sequence is VLLSKLACSK…IGSFRTYQDQ (143 aa). Zn(2+)-binding residues include H162, H164, and D175. Positions 162–175 match the JAMM motif motif; that stretch reads HSHPGYDCWLSNID. The disordered stretch occupies residues 364–386; it reads SSIHTQMNNQNNQQERNSPKRPH.

Belongs to the peptidase M67A family. CSN5 subfamily. As to quaternary structure, component of the COP9 signalosome (CSN) complex.

The protein resides in the cytoplasm. It localises to the nucleus. Its function is as follows. Catalytic Component of the COP9 signalosome (CSN) complex that acts as an regulator of the ubiquitin (Ubl) conjugation pathway by mediating the deneddylation of the cullin subunit of SCF-type E3 ubiquitin-protein ligase complexes. This chain is COP9 signalosome complex subunit 5 (RRI1), found in Candida glabrata (strain ATCC 2001 / BCRC 20586 / JCM 3761 / NBRC 0622 / NRRL Y-65 / CBS 138) (Yeast).